A 579-amino-acid polypeptide reads, in one-letter code: Eukaryotic translation initiation factor 3 subunit D (579 aa).

Disordered regions lie at residues 1 to 20 (MASF…GPAS), 51 to 72 (NASG…RARD), and 109 to 170 (RRGG…FGWK). Low complexity predominate over residues 51–64 (NASGASNDAANARG). Positions 120–167 (GGRGGRGGAGGAGAAGGRGASKFGAGAGRGARGGRGGAAGARRGGGRF) are enriched in gly residues. The tract at residues 307–321 (AFDYLTVNENAADPP) is RNA gate.

Belongs to the eIF-3 subunit D family. As to quaternary structure, component of the eukaryotic translation initiation factor 3 (eIF-3) complex.

The protein resides in the cytoplasm. MRNA cap-binding component of the eukaryotic translation initiation factor 3 (eIF-3) complex, which is involved in protein synthesis of a specialized repertoire of mRNAs and, together with other initiation factors, stimulates binding of mRNA and methionyl-tRNAi to the 40S ribosome. The eIF-3 complex specifically targets and initiates translation of a subset of mRNAs involved in cell proliferation. In the eIF-3 complex, eif3d specifically recognizes and binds the 7-methylguanosine cap of a subset of mRNAs. The polypeptide is Eukaryotic translation initiation factor 3 subunit D (Mycosarcoma maydis (Corn smut fungus)).